We begin with the raw amino-acid sequence, 512 residues long: Opioid growth factor receptor-like protein 1 (512 aa).

3 disordered regions span residues 1-72 (MGNI…ETGT), 323-469 (IWGP…TCCK), and 488-512 (SLSP…GPFT). 2 stretches are compositionally biased toward acidic residues: residues 28–54 (GGEE…DNEE) and 62–71 (TNEGGEEETG). A compositionally biased stretch (basic and acidic residues) spans 328–337 (DKQKADENKA). The segment covering 347-361 (QKKHSHVEKKSRPAK) has biased composition (basic residues). The segment covering 408 to 421 (TVTSENNSSKTGQT) has biased composition (polar residues). Over residues 449–468 (RSLDTEHDLKRPEADRETCC) the composition is skewed to basic and acidic residues. The span at 490 to 499 (SPGTSNSNVT) shows a compositional bias: polar residues.

It belongs to the opioid growth factor receptor family.

This chain is Opioid growth factor receptor-like protein 1 (ogfrl1), found in Xenopus tropicalis (Western clawed frog).